The following is a 1110-amino-acid chain: Nonribisomal peptide synthetase benY (1110 aa).

The adenylation stretch occupies residues 47–443 (RALEFPEKIA…GRKDHQLKVR (397 aa)). The Carrier domain occupies 575–651 (TLETESEKIL…EMAQSARVVP (77 aa)). Position 612 is an O-(pantetheine 4'-phosphoryl)serine (Ser612). A condensation region spans residues 713–1025 (YILDGDVDFD…IFHHQNIDTK (313 aa)).

Belongs to the NRP synthetase family.

It participates in secondary metabolite biosynthesis. In terms of biological role, nonribisomal peptide synthetase; part of the gene cluster that mediates the biosynthesis of benzomalvin A and D. The pathway begins with the loading of amino acid precursors onto the A domains of the non ribosomal peptide synthetases benY and benZ. BenY and the A1 domain of benZ are loaded with anthranilate (Anth), while the A2 domain of benZ is loaded with phenylalanine (Phe). N-methylation of Phe by the methyltransferase benX may happen before loading of Phe onto benZ, after loading of Phe, or after dipeptide formation. Condensation of Anth with the secondary amine of NmPhe or Phe is catalyzed by the C1 domain of benZ, forming a dipeptide intermediate. This is followed by in trans condensation of the Anth-NmPhe dipeptide with Anth bound to the T domain of benY by the C2 domain of benZ to form the linear tripeptide Anth-NmPhe-Anth. Cyclization and release of the tripeptide is then catalyzed by the C-terminal C domain of benY and the resulting 11-member macrocyclic intermediate is expected to spontaneously collapse to form the benzodiazepine core. Benzomalvin A is in conformational equilibrium with its atropisomer, benzomalvin D. The sequence is that of Nonribisomal peptide synthetase benY from Aspergillus terreus.